We begin with the raw amino-acid sequence, 285 residues long: ATP synthase gamma chain (285 aa).

Belongs to the ATPase gamma chain family. F-type ATPases have 2 components, CF(1) - the catalytic core - and CF(0) - the membrane proton channel. CF(1) has five subunits: alpha(3), beta(3), gamma(1), delta(1), epsilon(1). CF(0) has three main subunits: a, b and c.

It localises to the cell membrane. Its function is as follows. Produces ATP from ADP in the presence of a proton gradient across the membrane. The gamma chain is believed to be important in regulating ATPase activity and the flow of protons through the CF(0) complex. This is ATP synthase gamma chain from Dehalococcoides mccartyi (strain ATCC BAA-2266 / KCTC 15142 / 195) (Dehalococcoides ethenogenes (strain 195)).